Here is a 587-residue protein sequence, read N- to C-terminus: Glutathione hydrolase proenzyme (587 aa).

An N-terminal signal peptide occupies residues 1–28 (MKRTWNVCLTALLSVLLVAGSVPFHAEA). Residues 29–35 (KKPPKSY) constitute a propeptide that is removed on maturation. Arginine 113 contributes to the L-glutamate binding site. Residue threonine 403 is the Nucleophile of the active site. L-glutamate contacts are provided by residues threonine 421, glutamate 423, glutamate 442, aspartate 445, 464–465 (SS), and 485–486 (GG).

This sequence belongs to the gamma-glutamyltransferase family. In terms of assembly, this enzyme consists of two polypeptide chains, which are synthesized in precursor form from a single polypeptide. Cleaved by autocatalysis into a large and a small subunit.

The protein resides in the secreted. The catalysed reaction is an N-terminal (5-L-glutamyl)-[peptide] + an alpha-amino acid = 5-L-glutamyl amino acid + an N-terminal L-alpha-aminoacyl-[peptide]. It carries out the reaction glutathione + H2O = L-cysteinylglycine + L-glutamate. The enzyme catalyses an S-substituted glutathione + H2O = an S-substituted L-cysteinylglycine + L-glutamate. Its pathway is sulfur metabolism; glutathione metabolism. Its function is as follows. Cleaves the gamma-glutamyl bond of extracellular glutathione (gamma-Glu-Cys-Gly), glutathione conjugates, and other gamma-glutamyl compounds. The metabolism of glutathione releases free glutamate and the dipeptide cysteinyl-glycine, which is hydrolyzed to cysteine and glycine by dipeptidases. The polypeptide is Glutathione hydrolase proenzyme (ggt) (Bacillus subtilis (strain 168)).